We begin with the raw amino-acid sequence, 176 residues long: ATP synthase subunit b (176 aa).

The chain crosses the membrane as a helical span at residues 24–43 (FAFRVVNFVIFAGIIWKAAG).

This sequence belongs to the ATPase B chain family. F-type ATPases have 2 components, F(1) - the catalytic core - and F(0) - the membrane proton channel. F(1) has five subunits: alpha(3), beta(3), gamma(1), delta(1), epsilon(1). F(0) has three main subunits: a(1), b(2) and c(10-14). The alpha and beta chains form an alternating ring which encloses part of the gamma chain. F(1) is attached to F(0) by a central stalk formed by the gamma and epsilon chains, while a peripheral stalk is formed by the delta and b chains.

The protein resides in the cell inner membrane. In terms of biological role, f(1)F(0) ATP synthase produces ATP from ADP in the presence of a proton or sodium gradient. F-type ATPases consist of two structural domains, F(1) containing the extramembraneous catalytic core and F(0) containing the membrane proton channel, linked together by a central stalk and a peripheral stalk. During catalysis, ATP synthesis in the catalytic domain of F(1) is coupled via a rotary mechanism of the central stalk subunits to proton translocation. Component of the F(0) channel, it forms part of the peripheral stalk, linking F(1) to F(0). The chain is ATP synthase subunit b from Nitratidesulfovibrio vulgaris (strain ATCC 29579 / DSM 644 / CCUG 34227 / NCIMB 8303 / VKM B-1760 / Hildenborough) (Desulfovibrio vulgaris).